Reading from the N-terminus, the 392-residue chain is V-type proton ATPase subunit C (392 aa).

Ala2 bears the N-acetylalanine mark.

The protein belongs to the V-ATPase C subunit family. In terms of assembly, V-ATPase is a heteromultimeric enzyme composed of a peripheral catalytic V1 complex (components A to H) attached to an integral membrane V0 proton pore complex (components: a, c, c', c'', d, e, f and VOA1). Interacts directly with VMA4.

The protein resides in the vacuole membrane. Its function is as follows. Subunit of the V1 complex of vacuolar(H+)-ATPase (V-ATPase), a multisubunit enzyme composed of a peripheral complex (V1) that hydrolyzes ATP and a membrane integral complex (V0) that translocates protons. V-ATPase is responsible for acidifying and maintaining the pH of intracellular compartments. Subunit C is necessary for the assembly of the catalytic sector of the enzyme and is likely to have a specific function in its catalytic activity. Reversibly leaves the enzyme after glucose depletion, causing the catalytic subcomplex V1 to detach from the V0 section. This chain is V-type proton ATPase subunit C, found in Saccharomyces cerevisiae (strain ATCC 204508 / S288c) (Baker's yeast).